Consider the following 843-residue polypeptide: Glycogen phosphorylase, brain form (843 aa).

An N-acetylalanine modification is found at alanine 2. Serine 15 is modified (phosphoserine; by PHK; in form phosphorylase A). AMP is bound by residues aspartate 43, tyrosine 197, and arginine 310. Tyrosine 197 carries the post-translational modification Phosphotyrosine. Tyrosine 473 carries the phosphotyrosine modification. Lysine 569 contributes to the pyridoxal 5'-phosphate binding site. Positions 677 to 678 (TG) are pyridoxal 5'-phosphate. Lysine 681 is modified (N6-(pyridoxal phosphate)lysine).

This sequence belongs to the glycogen phosphorylase family. As to quaternary structure, homodimer. Dimers associate into a tetramer to form the enzymatically active phosphorylase A. Requires pyridoxal 5'-phosphate as cofactor. Post-translationally, phosphorylated. Phosphorylation of Ser-15 converts phosphorylase B (unphosphorylated) to phosphorylase A.

It catalyses the reaction [(1-&gt;4)-alpha-D-glucosyl](n) + phosphate = [(1-&gt;4)-alpha-D-glucosyl](n-1) + alpha-D-glucose 1-phosphate. Activity of phosphorylase is controlled both by allosteric means (through the non-covalent binding of metabolites) and by covalent modification. Thus AMP allosterically activates, whereas ATP, ADP, and glucose-6-phosphate allosterically inhibit, phosphorylase B. Activated upon phosphorylation. Its function is as follows. Glycogen phosphorylase that regulates glycogen mobilization. Phosphorylase is an important allosteric enzyme in carbohydrate metabolism. Enzymes from different sources differ in their regulatory mechanisms and in their natural substrates. However, all known phosphorylases share catalytic and structural properties. The chain is Glycogen phosphorylase, brain form from Homo sapiens (Human).